The following is a 586-amino-acid chain: Kelch-like protein 7 (586 aa).

One can recognise a BTB domain in the interval 44-111; that stretch reads CDVILMVQER…AYTARISVNS (68 aa). The BACK domain maps to 146–248; sequence CLGISVLAEC…SKNFLSKTVQ (103 aa). 6 Kelch repeats span residues 294 to 336, 337 to 382, 383 to 430, 431 to 481, 483 to 528, and 530 to 575; these read RIAL…FWDN, VVYI…AAEG, KIYT…EANG, LIYV…FVKD, IFAV…AVGS, and IYVL…CVVD.

As to quaternary structure, homodimer. Component of the BCR(KLHL7) E3 ubiquitin ligase complex, at least composed of CUL3 and KLHL7 and RBX1.

It localises to the nucleus. The protein localises to the cytoplasm. The protein operates within protein modification; protein ubiquitination. Its function is as follows. Substrate-specific adapter of a BCR (BTB-CUL3-RBX1) E3 ubiquitin ligase complex. The BCR(KLHL7) complex acts by mediating ubiquitination and subsequent degradation of substrate proteins. Probably mediates 'Lys-48'-linked ubiquitination. The sequence is that of Kelch-like protein 7 (Klhl7) from Rattus norvegicus (Rat).